The chain runs to 74 residues: ATP synthase subunit c (74 aa).

2 consecutive transmembrane segments (helical) span residues 8-28 (FIGI…VSNI) and 52-72 (IGAG…MLLI).

The protein belongs to the ATPase C chain family. As to quaternary structure, F-type ATPases have 2 components, F(1) - the catalytic core - and F(0) - the membrane proton channel. F(1) has five subunits: alpha(3), beta(3), gamma(1), delta(1), epsilon(1). F(0) has three main subunits: a(1), b(2) and c(10-14). The alpha and beta chains form an alternating ring which encloses part of the gamma chain. F(1) is attached to F(0) by a central stalk formed by the gamma and epsilon chains, while a peripheral stalk is formed by the delta and b chains.

It localises to the cell inner membrane. Its function is as follows. F(1)F(0) ATP synthase produces ATP from ADP in the presence of a proton or sodium gradient. F-type ATPases consist of two structural domains, F(1) containing the extramembraneous catalytic core and F(0) containing the membrane proton channel, linked together by a central stalk and a peripheral stalk. During catalysis, ATP synthesis in the catalytic domain of F(1) is coupled via a rotary mechanism of the central stalk subunits to proton translocation. In terms of biological role, key component of the F(0) channel; it plays a direct role in translocation across the membrane. A homomeric c-ring of between 10-14 subunits forms the central stalk rotor element with the F(1) delta and epsilon subunits. This chain is ATP synthase subunit c, found in Rickettsia akari (strain Hartford).